The primary structure comprises 492 residues: Cytochrome P450 26A1 (492 aa).

Cys-438 is a heme binding site.

It belongs to the cytochrome P450 family. Heme is required as a cofactor.

Its subcellular location is the endoplasmic reticulum membrane. The protein resides in the microsome membrane. It carries out the reaction all-trans-retinoate + reduced [NADPH--hemoprotein reductase] + O2 = all-trans-(4S)-hydroxyretinoate + oxidized [NADPH--hemoprotein reductase] + H2O + H(+). Its function is as follows. A cytochrome P450 monooxygenase involved in the metabolism of all-trans retinoic acid (atRA), a signaling molecule that binds to retinoic acid receptors and regulates gene transcription. Mechanistically, uses molecular oxygen inserting one oxygen atom into a substrate, and reducing the second into a water molecule, with two electrons provided by NADPH via cytochrome P450 reductase (CPR; NADPH-ferrihemoprotein reductase). Catalyzes the hydroxylation of carbon hydrogen bonds of atRA primarily at C-4. Has no activity toward 9-cis and 13-cis retinoic acid stereoisomers. May play a role in the oxidative metabolism of xenobiotics such as tazarotenic acid. The protein is Cytochrome P450 26A1 (cyp26a1) of Danio rerio (Zebrafish).